The primary structure comprises 140 residues: Large ribosomal subunit protein bL17 (140 aa).

It belongs to the bacterial ribosomal protein bL17 family. Part of the 50S ribosomal subunit. Contacts protein L32.

This Gluconobacter oxydans (strain 621H) (Gluconobacter suboxydans) protein is Large ribosomal subunit protein bL17.